A 503-amino-acid polypeptide reads, in one-letter code: 5'-3' exonuclease PLD4 (503 aa).

At Met1–Gly36 the chain is on the cytoplasmic side. The chain crosses the membrane as a signal-anchor for type II membrane protein span at residues Met37–Trp57. Residues Gln58–Trp503 lie on the Lumenal side of the membrane. Residues Asn89, Asn148, and Asn169 are each glycosylated (N-linked (GlcNAc...) asparagine). Cys92 and Cys248 are oxidised to a cystine. Residues Thr207–Ser234 enclose the PLD phosphodiesterase 1 domain. Active-site residues include His212, Lys214, and Asp219. Catalysis depends on His212, which acts as the Proton donor. Asn247, Asn279, Asn415, and Asn425 each carry an N-linked (GlcNAc...) asparagine glycan. An intrachain disulfide couples Cys377 to Cys501. In terms of domain architecture, PLD phosphodiesterase 2 spans Phe421–Tyr447. Catalysis depends on residues His426, Lys428, and Asp433. His426 acts as the Nucleophile in catalysis. Residue Asn442 is glycosylated (N-linked (GlcNAc...) asparagine).

It belongs to the phospholipase D family. In terms of processing, highly N-glycosylated. As to expression, enriched in the white matter of early postnatal brains, as well as in splenic marginal zone cells. Highly expressed in dendritic cells (DCs) and other myeloid cells, with lower expression in B cell.

The protein localises to the endoplasmic reticulum membrane. Its subcellular location is the golgi apparatus. It localises to the trans-Golgi network membrane. It is found in the nucleus. The protein resides in the early endosome. The protein localises to the cytoplasmic vesicle. Its subcellular location is the phagosome. It localises to the lysosome. The catalysed reaction is Exonucleolytic cleavage in the 5'- to 3'-direction to yield nucleoside 3'-phosphates.. It catalyses the reaction a 5'-end 5'-dephospho-ribonucleotidyl-ribonucleotide-RNA + H2O = a ribonucleoside 3'-phosphate + a 5'-end dephospho-ribonucleoside-RNA + H(+). The enzyme catalyses a ribonucleoside 3'-phosphate-2'-3'-cyclophospho-GMP + H2O = a ribonucleoside 3'-phosphate + 2',3'-cyclophospho-GMP + H(+). It carries out the reaction a 5'-end 5'-dephospho-2'-deoxyribonucleotidyl-2'-deoxyribonucleotide in single-stranded DNA + H2O = a 5'-end dephospho-2'-deoxyribonucleoside in single-stranded DNA + a 2'-deoxyribonucleoside 3'-phosphate + H(+). The catalysed reaction is a 5'-end 5'-phospho-2'-deoxyribonucleotide in single-stranded DNA + H2O = a 5'-end 5'-dephospho-2'-deoxyribonucleotide in single-stranded DNA + phosphate. It catalyses the reaction a 3-lyso-sn-glycero-1-phospho-(3'-acyl-1'-sn-glycerol) + a 1-acyl-sn-glycerol = a 3-acyl-sn-glycero-1-phospho-(3'-acyl-1'-sn-glycerol) + glycerol. The enzyme catalyses 3-lyso-sn-glycero-1-phospho-(3'-(9Z-octadecenoyl)-1'-sn-glycerol) + 1-(9Z-octadecenoyl)-sn-glycerol = 3-(9Z-octadecenoyl)-sn-glycero-1-phospho-(3'-(9Z-octadecenoyl)-1'-sn-glycerol) + glycerol. Its activity is regulated as follows. The exonuclease activity toward ssDNA substrate is Ca(2+) and Mg(2+)-independent, but it is inhibited by Fe(2+), Cu(2+) and to a lesser extent Zn(2+) ions. Its function is as follows. 5'-&gt;3' exonuclease that hydrolyzes the phosphodiester bond of single-stranded DNA (ssDNA) and RNA molecules to form nucleoside 3'-monophosphates and 5'-end 5'-hydroxy deoxyribonucleotide/ribonucleotide fragments. Partially redundant with PLD4, can cleave all four nucleotides displaying higher efficiency for ssDNA and RNA fragments initiated with uridine and guanosine residues and lower efficiency for cytidine-initiated substrates. As a result, it does not always degrade polynucleotides to the single nucleotide level, it can stall at specific sites sparing certain fragments from exonucleolytic degradation. Processes self and pathogenic ssDNA and RNA molecules that reach the endolysosomal compartment via phagocytosis or autophagy and may serve as 'danger' signals for recognition by innate immune receptors such as toll-like receptors (TLRs). Degrades mitochondrial CpG-rich ssDNA fragments to prevent TLR9 activation and autoinflammatory response, but it can cleave viral RNA to generate ligands for TLR7 activation and initiate antiviral immune responses. In plasmacytoid dendritic cells, it cooperates with endonuclease RNASET2 to release 2',3'-cyclic guanosine monophosphate (2',3'-cGMP), a potent stimulatory ligand for TLR7. Produces 2',3'-cGMPs and cytidine-rich RNA fragments that occupy TLR7 ligand-binding pockets and trigger a signaling-competent state. Can exert polynucleotide phosphatase activity toward 5'-phosphorylated ssDNA substrates although at a slow rate. Transphosphatidylase that catalyzes the exchange with R to S stereo-inversion of the glycerol moiety between (S,R)-lysophosphatidylglycerol (LPG) and monoacylglycerol (MAG) substrates to yield (S,S)-bis(monoacylglycero)phosphate (BMP). Can synthesize a variety of (S,S)-BMPs representing the main phospholipid constituent of lysosomal intralumenal vesicle (ILV) membranes that bind acid hydrolases for lipid degradation. Regulates the homeostasis and interorganellar communication of the endolysosomal system with an overall impact on cellular removal of dysfunctional organelles via autophagy as well as proper protein and lipid turnover. May play a role in myotube formation in response to ER stress. The chain is 5'-3' exonuclease PLD4 from Mus musculus (Mouse).